The chain runs to 435 residues: ATP-dependent protease ATPase subunit HslU (435 aa).

ATP is bound by residues valine 18, 60-65, aspartate 248, glutamate 313, and arginine 385; that span reads GCGKTE.

The protein belongs to the ClpX chaperone family. HslU subfamily. In terms of assembly, a double ring-shaped homohexamer of HslV is capped on each side by a ring-shaped HslU homohexamer. The assembly of the HslU/HslV complex is dependent on binding of ATP.

Its subcellular location is the cytoplasm. In terms of biological role, ATPase subunit of a proteasome-like degradation complex; this subunit has chaperone activity. The binding of ATP and its subsequent hydrolysis by HslU are essential for unfolding of protein substrates subsequently hydrolyzed by HslV. HslU recognizes the N-terminal part of its protein substrates and unfolds these before they are guided to HslV for hydrolysis. In Beijerinckia indica subsp. indica (strain ATCC 9039 / DSM 1715 / NCIMB 8712), this protein is ATP-dependent protease ATPase subunit HslU.